A 263-amino-acid chain; its full sequence is Small ribosomal subunit protein eS4, Y isoform 1 (263 aa).

Residues 42-104 enclose the S4 RNA-binding domain; sequence LPLIVFLRNR…TGEHFRLVYD (63 aa).

The protein belongs to the eukaryotic ribosomal protein eS4 family.

This Homo sapiens (Human) protein is Small ribosomal subunit protein eS4, Y isoform 1 (RPS4Y1).